The chain runs to 92 residues: RNA-binding protein Hfq (92 aa).

Positions 10-71 (DLFLNQLRKE…ISSIMPSKPI (62 aa)) constitute a Sm domain. Positions 73-92 (YMAQAQNNQQASQQSNNNQG) are disordered. Positions 75–92 (AQAQNNQQASQQSNNNQG) are enriched in low complexity.

Belongs to the Hfq family. In terms of assembly, homohexamer.

RNA chaperone that binds small regulatory RNA (sRNAs) and mRNAs to facilitate mRNA translational regulation in response to envelope stress, environmental stress and changes in metabolite concentrations. Also binds with high specificity to tRNAs. This chain is RNA-binding protein Hfq, found in Caldicellulosiruptor bescii (strain ATCC BAA-1888 / DSM 6725 / KCTC 15123 / Z-1320) (Anaerocellum thermophilum).